Here is a 280-residue protein sequence, read N- to C-terminus: 2-dehydro-3-deoxyphosphooctonate aldolase (280 aa).

Belongs to the KdsA family.

It localises to the cytoplasm. The catalysed reaction is D-arabinose 5-phosphate + phosphoenolpyruvate + H2O = 3-deoxy-alpha-D-manno-2-octulosonate-8-phosphate + phosphate. It participates in carbohydrate biosynthesis; 3-deoxy-D-manno-octulosonate biosynthesis; 3-deoxy-D-manno-octulosonate from D-ribulose 5-phosphate: step 2/3. It functions in the pathway bacterial outer membrane biogenesis; lipopolysaccharide biosynthesis. This Thioalkalivibrio sulfidiphilus (strain HL-EbGR7) protein is 2-dehydro-3-deoxyphosphooctonate aldolase.